We begin with the raw amino-acid sequence, 138 residues long: Cysteine desulfuration protein SufE (138 aa).

The active-site Cysteine persulfide intermediate is the Cys-51.

The protein belongs to the SufE family. In terms of assembly, homodimer. Interacts with SufS.

The protein resides in the cytoplasm. It participates in cofactor biosynthesis; iron-sulfur cluster biosynthesis. Its function is as follows. Participates in cysteine desulfuration mediated by SufS. Cysteine desulfuration mobilizes sulfur from L-cysteine to yield L-alanine and constitutes an essential step in sulfur metabolism for biosynthesis of a variety of sulfur-containing biomolecules. Functions as a sulfur acceptor for SufS, by mediating the direct transfer of the sulfur atom from the S-sulfanylcysteine of SufS, an intermediate product of cysteine desulfuration process. This is Cysteine desulfuration protein SufE from Salmonella choleraesuis (strain SC-B67).